The sequence spans 154 residues: Ribonuclease H (154 aa).

In terms of domain architecture, RNase H type-1 spans 1–142; that stretch reads MTPKLVIYTD…ADELARLGML (142 aa). Residues Asp10, Glu48, Asp70, and Asp134 each coordinate Mg(2+).

It belongs to the RNase H family. Monomer. Requires Mg(2+) as cofactor.

Its subcellular location is the cytoplasm. The catalysed reaction is Endonucleolytic cleavage to 5'-phosphomonoester.. Endonuclease that specifically degrades the RNA of RNA-DNA hybrids. The polypeptide is Ribonuclease H (Caulobacter sp. (strain K31)).